The primary structure comprises 139 residues: Large ribosomal subunit protein uL16 (139 aa).

The protein belongs to the universal ribosomal protein uL16 family. As to quaternary structure, part of the 50S ribosomal subunit.

Binds 23S rRNA and is also seen to make contacts with the A and possibly P site tRNAs. In Picosynechococcus sp. (strain ATCC 27264 / PCC 7002 / PR-6) (Agmenellum quadruplicatum), this protein is Large ribosomal subunit protein uL16.